The chain runs to 282 residues: MPADIMEKNSSSPVAATPASVNTTPDKPKTASEHRKSSKPIMEKRRRARINESLSQLKTLILDALKKDSSRHSKLEKADILEMTVKHLRNLQRAQMTAALSTDPSVLGKYRAGFSECMNEVTRFLSTCEGVNTEVRTRLLGHLANCMTQINAMTYPGQAHPALQAPPPPPPSGPAGPQHAPFAPPPPPLVPIPGGAAPPPGSAPCKLGSQAGEAAKVFGGFQVVPAPDGQFAFLIPNGAFAHSGPVIPVYTSNSGTSVGPNAVSPSSGSSLTSDSMWRPWRN.

The interval 1 to 44 (MPADIMEKNSSSPVAATPASVNTTPDKPKTASEHRKSSKPIMEK) is disordered. The segment covering 10–21 (SSSPVAATPASV) has biased composition (low complexity). The span at 26–35 (DKPKTASEHR) shows a compositional bias: basic and acidic residues. The bHLH domain occupies 34 to 91 (HRKSSKPIMEKRRRARINESLSQLKTLILDALKKDSSRHSKLEKADILEMTVKHLRNL). Positions 110–143 (YRAGFSECMNEVTRFLSTCEGVNTEVRTRLLGHL) constitute an Orange domain. Disordered regions lie at residues 158 to 204 (QAHP…GSAP) and 256 to 282 (TSVG…PWRN). 2 stretches are compositionally biased toward pro residues: residues 164–174 (QAPPPPPPSGP) and 182–202 (FAPP…PPGS). The span at 264 to 275 (SPSSGSSLTSDS) shows a compositional bias: low complexity. A WRPW motif motif is present at residues 277–280 (WRPW).

As to quaternary structure, interacts with SIRT1. Transcription repression requires formation of a complex with a corepressor protein of the Groucho/TLE family. Interacts (via WPRW motif) with TLE1, and more weakly with TLE2. Interacts with HES6. Interacts with an FA complex, composed of FANCA, FANCF, FANCG and FANCL, but not of FANCC, nor FANCE. As to expression, expressed at high levels in undifferentiated neural precursor cells, but the level of expression decreases as neural differentiation proceeds.

It is found in the nucleus. Its function is as follows. Transcriptional repressor of genes that require a bHLH protein for their transcription. May act as a negative regulator of myogenesis by inhibiting the functions of MYOD1 and ASH1. Binds DNA on N-box motifs: 5'-CACNAG-3' with high affinity and on E-box motifs: 5'-CANNTG-3' with low affinity. May play a role in a functional FA core complex response to DNA cross-link damage, being required for the stability and nuclear localization of FA core complex proteins, as well as for FANCD2 monoubiquitination in response to DNA damage. This is Transcription factor HES-1 (Hes1) from Mus musculus (Mouse).